The primary structure comprises 825 residues: MDVSLCPAKCSFWRIFLLGSVWLDYVGSVLACPANCVCSKTEINCRRPDDGNLFPLLEGQDSGNSNGNASINITDISRNITSIHIENWRSLHTLNAVDMELYTGLQKLTIKNSGLRSIQPRAFAKNPHLRYINLSSNRLTTLSWQLFQTLSLRELQLEQNFFNCSCDIRWMQLWQEQGEAKLNSQNLYCINTDGSQLPLFRMNISQCDLPEISVSHVNLTVREGDNAVITCNGSGSPLPDVDWIVTGLQSINTHQTNLNWTNVHAINLTLVNVTSEDNGFTLTCIAENVVGMSNASVALTVYYPPRVVSLEEPELRLEHCIEFVVRGNPPPTLHWLHNGQPLRESKIIHVEYYQEGEISEGCLLFNKPTHYNNGNYTLIAKNPLGTANQTISGHFLKEPFPESTDNFILFDEVSPTPPITVTHKPEEDTFGVSIAVGLAAFACVLLVVLFVMINKYGRRSKFGMKGPVAVISGEEDSASPLHHINHGITTPSSLDAGPDTVVIGMTRIPVIENPQYFRQGHNCHKPDTYVQHIKRRDIVLKRELGEGAFGKVFLAECYNLSPTKDKMLVAVKALKDPTLAARKDFQREAELLTNLQHEHIVKFYGVCGDGDPLIMVFEYMKHGDLNKFLRAHGPDAMILVDGQPRQAKGELGLSQMLHIASQIASGMVYLASQHFVHRDLATRNCLVGANLLVKIGDFGMSRDVYSTDYYRVGGHTMLPIRWMPPESIMYRKFTTESDVWSFGVILWEIFTYGKQPWFQLSNTEVIECITQGRVLERPRVCPKEVYDVMLGCWQREPQQRLNIKEIYKILHALGKATPIYLDILG.

The first 31 residues, 1-31, serve as a signal peptide directing secretion; it reads MDVSLCPAKCSFWRIFLLGSVWLDYVGSVLA. 2 cysteine pairs are disulfide-bonded: Cys32/Cys38 and Cys36/Cys45. Residues 32 to 429 lie on the Extracellular side of the membrane; sequence CPANCVCSKT…TVTHKPEEDT (398 aa). N-linked (GlcNAc...) asparagine glycosylation is found at Asn68, Asn72, and Asn79. LRR repeat units lie at residues 104–125 and 128–149; these read GLQK…AFAK and HLRY…LFQT. N-linked (GlcNAc...) asparagine glycosylation is found at Asn133 and Asn163. Residues 160 to 209 form the LRRCT domain; that stretch reads NFFNCSCDIRWMQLWQEQGEAKLNSQNLYCINTDGSQLPLFRMNISQCDL. Cystine bridges form between Cys164-Cys189 and Cys166-Cys207. Asn203, Asn218, Asn232, Asn259, Asn267, Asn272, and Asn294 each carry an N-linked (GlcNAc...) asparagine glycan. Ig-like C2-type domains lie at 210-300 and 309-382; these read PEIS…VALT and SLEE…IAKN. The cysteines at positions 231 and 284 are disulfide-linked. Residues Cys320 and Cys362 are joined by a disulfide bond. Residues Asn375 and Asn388 are each glycosylated (N-linked (GlcNAc...) asparagine). A helical membrane pass occupies residues 430 to 453; the sequence is FGVSIAVGLAAFACVLLVVLFVMI. At 454-825 the chain is on the cytoplasmic side; that stretch reads NKYGRRSKFG…ATPIYLDILG (372 aa). Ser493 is modified (phosphoserine). Residue Tyr516 is modified to Phosphotyrosine; by autocatalysis. The Protein kinase domain occupies 538-825; sequence IVLKRELGEG…ATPIYLDILG (288 aa). Residues 544-552 and Lys572 contribute to the ATP site; that span reads LGEGAFGKV. Catalysis depends on Asp679, which acts as the Proton acceptor. Phosphotyrosine; by autocatalysis occurs at positions 705, 709, and 710.

Belongs to the protein kinase superfamily. Tyr protein kinase family. Insulin receptor subfamily. Exists in a dynamic equilibrium between monomeric (low affinity) and dimeric (high affinity) structures. Binds SH2B2. Interacts with SQSTM1 and KIDINS220. Interacts with PTPRS. Interacts with MAPK8IP3/JIP3. Ligand-mediated auto-phosphorylation.

Its subcellular location is the membrane. It carries out the reaction L-tyrosyl-[protein] + ATP = O-phospho-L-tyrosyl-[protein] + ADP + H(+). In terms of biological role, receptor tyrosine kinase involved in nervous system and probably heart development. Upon binding of its ligand NTF3/neurotrophin-3, NTRK3 autophosphorylates and activates different signaling pathways, including the phosphatidylinositol 3-kinase/AKT and the MAPK pathways, that control cell survival and differentiation. This Pan troglodytes (Chimpanzee) protein is NT-3 growth factor receptor (NTRK3).